Here is a 579-residue protein sequence, read N- to C-terminus: L-arabinonate dehydratase (579 aa).

Cys59 contributes to the [2Fe-2S] cluster binding site. Position 91 (Glu91) interacts with Mg(2+). Position 127 (Cys127) interacts with [2Fe-2S] cluster. Asp128 is a Mg(2+) binding site. Cys200 lines the [2Fe-2S] cluster pocket. Mg(2+) is bound at residue Glu453.

Belongs to the IlvD/Edd family. As to quaternary structure, homotetramer. [2Fe-2S] cluster serves as cofactor. Mg(2+) is required as a cofactor.

The catalysed reaction is L-arabinonate = 2-dehydro-3-deoxy-L-arabinonate + H2O. It carries out the reaction D-galactonate = 2-dehydro-3-deoxy-D-galactonate + H2O. The enzyme catalyses D-fuconate = 2-dehydro-3-deoxy-D-fuconate + H2O. The protein operates within carbohydrate metabolism. Catalyzes the dehydration of L-arabinonate to 2-dehydro-3-deoxy-L-arabinonate during L-arabinose degradation. Can also dehydrate D-galactonate and D-fuconate with good catalytic efficiency. Has weak activity with D-xylonate and D-gluconate. The protein is L-arabinonate dehydratase of Rhizobium leguminosarum bv. trifolii (strain WSM2304).